The primary structure comprises 146 residues: Transcriptional regulator MraZ (146 aa).

SpoVT-AbrB domains follow at residues 5-47 (EYYH…TITD) and 76-119 (SVQV…AKER).

It belongs to the MraZ family. In terms of assembly, forms oligomers.

Its subcellular location is the cytoplasm. It localises to the nucleoid. The chain is Transcriptional regulator MraZ from Dictyoglomus turgidum (strain DSM 6724 / Z-1310).